An 82-amino-acid polypeptide reads, in one-letter code: Small ribosomal subunit protein bS16 (82 aa).

The protein belongs to the bacterial ribosomal protein bS16 family.

The sequence is that of Small ribosomal subunit protein bS16 from Caldanaerobacter subterraneus subsp. tengcongensis (strain DSM 15242 / JCM 11007 / NBRC 100824 / MB4) (Thermoanaerobacter tengcongensis).